A 63-amino-acid chain; its full sequence is Conotoxin Pu5.4 (63 aa).

The N-terminal stretch at 1 to 22 (MRCVPVFVILLLLIASTPSVDA) is a signal peptide. A propeptide spanning residues 23 to 50 (TQKTKDDMSLASFHDNAKRFLQTLRNTR) is cleaved from the precursor. At tryptophan 62 the chain carries Tryptophan amide.

The protein belongs to the conotoxin T superfamily. Post-translationally, contains 2 disulfide bonds that can be either 'C1-C3, C2-C4' or 'C1-C4, C2-C3', since these disulfide connectivities have been observed for conotoxins with cysteine framework V (for examples, see AC P0DQQ7 and AC P81755). As to expression, expressed by the venom duct.

It is found in the secreted. This Conus pulicarius (Flea-bitten cone) protein is Conotoxin Pu5.4.